A 248-amino-acid polypeptide reads, in one-letter code: PF03932 family protein CutC (248 aa).

This sequence belongs to the CutC family. As to quaternary structure, homodimer.

Its subcellular location is the cytoplasm. In Salmonella schwarzengrund (strain CVM19633), this protein is PF03932 family protein CutC.